The chain runs to 565 residues: Sulfite reductase [NADPH] hemoprotein beta-component (565 aa).

4 residues coordinate [4Fe-4S] cluster: Cys429, Cys435, Cys474, and Cys478. Residue Cys478 participates in siroheme binding.

The protein belongs to the nitrite and sulfite reductase 4Fe-4S domain family. In terms of assembly, alpha(8)-beta(8). The alpha component is a flavoprotein, the beta component is a hemoprotein. Siroheme is required as a cofactor. It depends on [4Fe-4S] cluster as a cofactor.

It carries out the reaction hydrogen sulfide + 3 NADP(+) + 3 H2O = sulfite + 3 NADPH + 4 H(+). It functions in the pathway sulfur metabolism; hydrogen sulfide biosynthesis; hydrogen sulfide from sulfite (NADPH route): step 1/1. In terms of biological role, component of the sulfite reductase complex that catalyzes the 6-electron reduction of sulfite to sulfide. This is one of several activities required for the biosynthesis of L-cysteine from sulfate. The polypeptide is Sulfite reductase [NADPH] hemoprotein beta-component (Pseudoalteromonas translucida (strain TAC 125)).